A 640-amino-acid chain; its full sequence is uncharacterized protein (640 aa).

A disordered region spans residues 594–614 (QCSSDHCKPGSSETLPEATNE).

This is an uncharacterized protein from Rattus norvegicus (Rat).